The sequence spans 718 residues: Cyclomaltodextrin glucanotransferase (718 aa).

A signal peptide spans M1–A34. Positions D35–P172 are A1. Ca(2+) is bound by residues D61, N63, N66, and N67. Cysteines 77 and 84 form a disulfide. Residues G85 and D87 each coordinate Ca(2+). Residue Y134–W135 participates in substrate binding. A Ca(2+)-binding site is contributed by N173. Positions N173–H236 are b. Position 174 (H174) interacts with substrate. I224 serves as a coordination point for Ca(2+). Residues N227–D230 and D230 each bind substrate. D233 is a Ca(2+) binding site. Residues N237 to Y440 are A2. R261 serves as a coordination point for substrate. Residue D263 is the Nucleophile of the active site. Substrate-binding positions include K266–H267 and H267. Residue H267 participates in Ca(2+) binding. The Proton donor role is filled by E291. Substrate-binding residues include H361, D405, and R409. Positions G441–A528 are c. Positions E529–L614 are d. One can recognise an IPT/TIG domain in the interval P532–T612. Residues I613–Q718 form the CBM20 domain. The e stretch occupies residues T615–Q718.

This sequence belongs to the glycosyl hydrolase 13 family. As to quaternary structure, monomer. Ca(2+) is required as a cofactor.

The protein resides in the secreted. It carries out the reaction Cyclizes part of a (1-&gt;4)-alpha-D-glucan chain by formation of a (1-&gt;4)-alpha-D-glucosidic bond.. The polypeptide is Cyclomaltodextrin glucanotransferase (Niallia circulans (Bacillus circulans)).